A 133-amino-acid polypeptide reads, in one-letter code: ATP synthase epsilon chain (133 aa).

The protein belongs to the ATPase epsilon chain family. As to quaternary structure, F-type ATPases have 2 components, CF(1) - the catalytic core - and CF(0) - the membrane proton channel. CF(1) has five subunits: alpha(3), beta(3), gamma(1), delta(1), epsilon(1). CF(0) has three main subunits: a, b and c.

The protein resides in the cellular thylakoid membrane. Functionally, produces ATP from ADP in the presence of a proton gradient across the membrane. This is ATP synthase epsilon chain from Prochlorococcus marinus (strain MIT 9303).